A 219-amino-acid chain; its full sequence is Mediator of RNA polymerase II transcription subunit 20b (219 aa).

This sequence belongs to the Mediator complex subunit 20 family. As to quaternary structure, component of the Mediator complex.

It localises to the nucleus. In terms of biological role, component of the Mediator complex, a coactivator involved in the regulated transcription of nearly all RNA polymerase II-dependent genes. Mediator functions as a bridge to convey information from gene-specific regulatory proteins to the basal RNA polymerase II transcription machinery. The Mediator complex, having a compact conformation in its free form, is recruited to promoters by direct interactions with regulatory proteins and serves for the assembly of a functional preinitiation complex with RNA polymerase II and the general transcription factors. This chain is Mediator of RNA polymerase II transcription subunit 20b (MED20B), found in Arabidopsis thaliana (Mouse-ear cress).